A 648-amino-acid chain; its full sequence is Transketolase (648 aa).

His22 is a binding site for substrate. Residues His62 and 109–111 each bind thiamine diphosphate; that span reads GPL. Asp150 is a binding site for Mg(2+). The thiamine diphosphate site is built by Gly151 and Asn180. The Mg(2+) site is built by Asn180 and Val182. His252, Arg345, and Ser372 together coordinate substrate. His252 serves as a coordination point for thiamine diphosphate. The Proton donor role is filled by Glu397. Phe423 lines the thiamine diphosphate pocket. His447, Asp455, and Arg506 together coordinate substrate.

Belongs to the transketolase family. As to quaternary structure, homodimer. Mg(2+) serves as cofactor. It depends on Ca(2+) as a cofactor. Requires Mn(2+) as cofactor. The cofactor is Co(2+). Thiamine diphosphate is required as a cofactor.

It carries out the reaction D-sedoheptulose 7-phosphate + D-glyceraldehyde 3-phosphate = aldehydo-D-ribose 5-phosphate + D-xylulose 5-phosphate. Its function is as follows. Catalyzes the transfer of a two-carbon ketol group from a ketose donor to an aldose acceptor, via a covalent intermediate with the cofactor thiamine pyrophosphate. The polypeptide is Transketolase (tkt) (Mycoplasma genitalium (strain ATCC 33530 / DSM 19775 / NCTC 10195 / G37) (Mycoplasmoides genitalium)).